The primary structure comprises 339 residues: S-adenosylmethionine:tRNA ribosyltransferase-isomerase (339 aa).

It belongs to the QueA family. Monomer.

It is found in the cytoplasm. The catalysed reaction is 7-aminomethyl-7-carbaguanosine(34) in tRNA + S-adenosyl-L-methionine = epoxyqueuosine(34) in tRNA + adenine + L-methionine + 2 H(+). It functions in the pathway tRNA modification; tRNA-queuosine biosynthesis. In terms of biological role, transfers and isomerizes the ribose moiety from AdoMet to the 7-aminomethyl group of 7-deazaguanine (preQ1-tRNA) to give epoxyqueuosine (oQ-tRNA). The protein is S-adenosylmethionine:tRNA ribosyltransferase-isomerase of Campylobacter fetus subsp. fetus (strain 82-40).